Reading from the N-terminus, the 309-residue chain is Dicarboxylate carrier UCP2 (309 aa).

The Mitochondrial intermembrane portion of the chain corresponds to 1–16 (MVGFKATDVPPTATVK). Solcar repeat units follow at residues 11–106 (PTAT…VKQF), 114–203 (AGIG…IKDA), and 212–297 (DDLP…LKRA). The important for interaction with long-chain fatty acids stretch occupies residues 16 to 63 (KFLGAGTAACIADLITFPLDTAKVRLQIQGERQGPVRAAASAQYRGVL). The helical transmembrane segment at 17–40 (FLGAGTAACIADLITFPLDTAKVR) threads the bilayer. Residues 41–77 (LQIQGERQGPVRAAASAQYRGVLCTILTMVRTEGPRS) are Mitochondrial matrix-facing. Residues 78–103 (LYSGLVAGLQRQMSFASVRIGLYDSV) traverse the membrane as a helical segment. Topologically, residues 104 to 119 (KQFYTKGSEHAGIGSR) are mitochondrial intermembrane. A helical membrane pass occupies residues 120–145 (LLAGSTTGALAVAVAQPTDVVKVRFQ). Residues 146–173 (AQARAGSGRRYQSTVDAYKTIAREEGFR) are Mitochondrial matrix-facing. A helical membrane pass occupies residues 174-199 (GLWKGTSPNVARNAIVNCAELVTYDL). Topologically, residues 200–217 (IKDALLKANLMTDDLPCH) are mitochondrial intermembrane. A helical transmembrane segment spans residues 218-242 (FTSAFGAGFCTTVIASPVDVVKTRY). Topologically, residues 243-268 (MNSALGQYSSAGHCALTMLQKEGPRA) are mitochondrial matrix. Residues 269 to 294 (FYKGFMPSFLRLGSWNVVMFVTYEQL) form a helical membrane-spanning segment. The tract at residues 278 to 285 (LRLGSWNV) is important for interaction with long-chain fatty acids. Residues 295–309 (KRALMAACTSREAPF) lie on the Mitochondrial intermembrane side of the membrane.

The protein belongs to the mitochondrial carrier (TC 2.A.29) family. Homotetramer. Adopts an asymmetrical dimer of dimers functional form. Interacts with MICU1 (when methylated); leading to decrease the calcium sensitivity of MICU1.

Its subcellular location is the mitochondrion inner membrane. The enzyme catalyses L-aspartate(out) + phosphate(in) + H(+)(in) = L-aspartate(in) + phosphate(out) + H(+)(out). It catalyses the reaction oxaloacetate(out) + phosphate(in) + H(+)(in) = oxaloacetate(in) + phosphate(out) + H(+)(out). The catalysed reaction is (S)-malate(out) + phosphate(in) + H(+)(in) = (S)-malate(in) + phosphate(out) + H(+)(out). It carries out the reaction malonate(out) + phosphate(in) + H(+)(in) = malonate(in) + phosphate(out) + H(+)(out). The enzyme catalyses sulfate(out) + phosphate(in) + H(+)(in) = sulfate(in) + phosphate(out) + H(+)(out). It catalyses the reaction (S)-malate(out) = (S)-malate(in). The catalysed reaction is L-aspartate(out) = L-aspartate(in). It carries out the reaction phosphate(in) = phosphate(out). The enzyme catalyses chloride(in) = chloride(out). It catalyses the reaction H(+)(in) = H(+)(out). The catalysed reaction is a long-chain fatty acid(out) = a long-chain fatty acid(in). In terms of biological role, antiporter that exports dicarboxylate intermediates of the Krebs cycle in exchange for phosphate plus a proton across the inner membrane of mitochondria, a process driven by mitochondrial motive force with an overall impact on glycolysis, glutaminolysis and glutathione-dependent redox balance. Continuous export of oxaloacetate and related four-carbon dicarboxylates from mitochondrial matrix into the cytosol negatively regulates the oxidation of acetyl-CoA substrates via the Krebs cycle lowering the ATP/ADP ratio and reactive oxygen species (ROS) production. May mediate inducible proton entry into the mitochondrial matrix affecting ATP turnover as a protection mechanism against oxidative stress. The proton currents are most likely associated with fatty acid flipping across the inner membrane of mitochondria in a metabolic process regulated by free fatty acids and purine nucleotides. Regulates the use of glucose as a source of energy. Required for glucose-induced DRP1-dependent mitochondrial fission and neuron activation in the ventromedial nucleus of the hypothalamus (VMH). This mitochondrial adaptation mechanism modulates the VMH pool of glucose-excited neurons with an impact on systemic glucose homeostasis. Regulates ROS levels and metabolic reprogramming of macrophages during the resolution phase of inflammation. Attenuates ROS production in response to IL33 to preserve the integrity of the Krebs cycle required for persistent production of itaconate and subsequent GATA3-dependent differentiation of inflammation-resolving alternatively activated macrophages. Can unidirectionally transport anions including L-malate, L-aspartate, phosphate and chloride ions. Does not mediate adaptive thermogenesis. This is Dicarboxylate carrier UCP2 (UCP2) from Canis lupus familiaris (Dog).